Consider the following 1603-residue polypeptide: Gag-Pol polyprotein (1603 aa).

The segment covering 124 to 141 has biased composition (basic and acidic residues); the sequence is KGEEVGETTAQRDAKMAP. A disordered region spans residues 124–144; the sequence is KGEEVGETTAQRDAKMAPEKM. The PPXY motif signature appears at 172–175; that stretch reads PPPY. The short motif at 180–184 is the LYPX(n)L motif element; the sequence is LYPSL. The Nuclear export signal signature appears at 219–229; sequence LTDWARIREEL. 2 CCHC-type zinc fingers span residues 507 to 524 and 533 to 550; these read GLCYTCGSPGHYQAQCPK and ERCQLCDGMGHNAKQCRR. The disordered stretch occupies residues 544-571; sequence NAKQCRRRDGNQGQRPGKGLSSGSWPVS. The region spanning 609 to 690 is the Peptidase A2 domain; that stretch reads ITALLDSGAD…VRGSILGRDC (82 aa). D614 functions as the For protease activity; shared with dimeric partner in the catalytic mechanism. The Reverse transcriptase domain maps to 750-938; the sequence is LQLGHIEPSL…PGVQYLGYKL (189 aa). Residues D815, D890, D891, D1158, E1192, D1213, and D1272 each coordinate Mg(2+). The RNase H type-1 domain maps to 1149–1280; it reads PVPGPTAFTD…ADSQATFQAY (132 aa). An Integrase-type zinc finger spans residues 1280 to 1321; it reads YPLREAKDLHTALHIGPRALSKACNISMQQAREVVQTCPHCN. The Zn(2+) site is built by H1289, H1293, C1317, and C1320. The Integrase catalytic domain occupies 1333–1496; sequence RGLGPLQIWQ…TPIQKHWRPT (164 aa). Residues D1344, D1401, and E1437 each contribute to the Mg(2+) site. Positions 1502–1550 form a DNA-binding region, integrase-type; it reads PPVKIRIETGEWEKGWNVLVWGRGYAAVKNRDTDKVIWVPSRKVKPDVT. Residues 1548–1567 form an involved in homooctamerization region; it reads DVTQKDEVTKKDEASPLFAG. Residues 1566–1603 form a disordered region; sequence AGISDWIPWEDEQEGLQGETASNKQERPGEDTLAANES.

Active as a homodimer. As to quaternary structure, homodimer. Homomultimer. Homohexamer. In terms of assembly, homodimer; further associates as a homooctamer. Heterodimer of alpha and beta subunits. Three forms of RT exist: alpha-alpha (alpha-Pol), beta-beta (beta-Pol), and alpha-beta, with the major form being the heterodimer. Both the polymerase and RNase H active sites are located in the alpha subunit of heterodimeric RT alpha-beta. The cofactor is Mg(2+). Mn(2+) serves as cofactor. Post-translationally, specific enzymatic cleavages in vivo yield mature proteins. Capsid protein p27: The cleavage at the C-terminus is slowly trimmed by the viral protease, sometimes being cut internally thereby generating the short version of the capsid protein and a capsid protein C-terminally extended by 3 amino acids in a ratio of 2:1.

Its subcellular location is the virion. It carries out the reaction DNA(n) + a 2'-deoxyribonucleoside 5'-triphosphate = DNA(n+1) + diphosphate. The enzyme catalyses Endonucleolytic cleavage to 5'-phosphomonoester.. Functionally, capsid protein p27: Self-associates to form the irregular polyhedron core composed of hexamers and pentamers, that encapsulates the genomic RNA-nucleocapsid complex. Assembles as a tube in vitro. Binds to inositol hexakisphosphate (IP6), which allows the assembly of the polyhedral capsid. Its function is as follows. Spacer peptide: Plays a role in the oligomerization of the Gag polyprotein and in the stabilization of the immature particle. Essential layering element during tube assembly. In terms of biological role, binds strongly to viral nucleic acids and promotes their packaging. Plays a role in the maturation-stabilization of the viral dimeric RNA via highly structured zinc-binding motifs. The aspartyl protease that mediates proteolytic cleavages of Gag and Gag-Pol polyproteins during or shortly after the release of the virion from the plasma membrane. Cleavages take place as an ordered, step-wise cascade to yield mature proteins. This process is called maturation. Displays maximal activity during the budding process just prior to particle release from the cell. Functionally, catalyzes viral DNA integration into the host chromosome, by performing a series of DNA cutting and joining reactions. This recombination event is an essential step in the viral replication cycle. Has a strong preference for using the 3'-OH at the viral DNA end as a nucleophile. In Avian leukosis virus subgroup A (isolate RSA) (ALV-A RSA), this protein is Gag-Pol polyprotein (gag-pol).